The following is a 159-amino-acid chain: MAIEGVMKEGFVTTTYDSVVNWAKTGSLWPMTFGLACCAVEMMHAGAARYDIDRFGMLFRPSPRQSDLMIVAGTLCNKMAPALRKVYDQMPEPRWVLSMGSCANGGGYYHYSYSVVRGCDRIVPVDVYVPGCPPTAEALLYGVIQLQQKIRRTNTIARA.

Residues Cys37, Cys38, Cys102, and Cys132 each contribute to the [4Fe-4S] cluster site.

It belongs to the complex I 20 kDa subunit family. In terms of assembly, NDH-1 is composed of 14 different subunits. Subunits NuoB, C, D, E, F, and G constitute the peripheral sector of the complex. It depends on [4Fe-4S] cluster as a cofactor.

It localises to the cell inner membrane. It carries out the reaction a quinone + NADH + 5 H(+)(in) = a quinol + NAD(+) + 4 H(+)(out). NDH-1 shuttles electrons from NADH, via FMN and iron-sulfur (Fe-S) centers, to quinones in the respiratory chain. The immediate electron acceptor for the enzyme in this species is believed to be ubiquinone. Couples the redox reaction to proton translocation (for every two electrons transferred, four hydrogen ions are translocated across the cytoplasmic membrane), and thus conserves the redox energy in a proton gradient. The sequence is that of NADH-quinone oxidoreductase subunit B from Variovorax paradoxus (strain S110).